Reading from the N-terminus, the 276-residue chain is Diaminopimelate epimerase (276 aa).

Asn-13, Gln-46, and Asn-66 together coordinate substrate. The active-site Proton donor is Cys-75. Substrate is bound by residues 76-77 (GN), Asn-159, Asn-192, and 210-211 (ER). Cys-219 serves as the catalytic Proton acceptor. 220-221 (GT) lines the substrate pocket.

This sequence belongs to the diaminopimelate epimerase family. As to quaternary structure, homodimer.

The protein resides in the cytoplasm. It carries out the reaction (2S,6S)-2,6-diaminopimelate = meso-2,6-diaminopimelate. It functions in the pathway amino-acid biosynthesis; L-lysine biosynthesis via DAP pathway; DL-2,6-diaminopimelate from LL-2,6-diaminopimelate: step 1/1. Catalyzes the stereoinversion of LL-2,6-diaminopimelate (L,L-DAP) to meso-diaminopimelate (meso-DAP), a precursor of L-lysine and an essential component of the bacterial peptidoglycan. This chain is Diaminopimelate epimerase, found in Pseudomonas syringae pv. syringae (strain B728a).